Reading from the N-terminus, the 551-residue chain is MSGADILEKTTRGATFLMMGQLFSKIVTFLLNNTLVRYLSPRIFGITAFLEFIVGTVLFFSREAIRLSTQRIADGNDADNDHDHDRDDSALQVCVNFAMIPLFIGIPLSIGLIAWQYHNINGYFVTLPFFQWSVFAIWVGIILELVNEPLFVLNQHFLNYGARSRYESIAVTANCLVNFTVVYSYEKKLILTSYFDDSERFREGIAILAFALGKLAYAATLLMCYYYNYLMNFKSNKPFKLSLQKIKSKVNEKQTYYFRSDILEHFKKVYFQLCFKHLLTEGDKLIINTFCTVEEQGIYSLLSNYGSLITRLLFAPIEESLRLLLAVLLSKKDSKNLQLSMKVLVNLTKFYLYLSLLVMIFGPNNSSYLLQFLIGSKWSTNSVLHAIRVYCVYIPFLSFNGIFEAFLASVATGDQILRHSYFMMMCSFAFLINSWIFIEYLDLSVNGLIISNIINMSLRIIYSFSFIVKFYRELHTESSIFMNFTNFKATLGAAALVAILNWQMVGYVSSFNGFITSATLALILLSVILIKERATLNELIINRRAANMKSV.

12 consecutive transmembrane segments (helical) span residues 16 to 36 (FLMMGQLFSKIVTFLLNNTLV), 40 to 60 (SPRIFGITAFLEFIVGTVLFF), 95 to 115 (VNFAMIPLFIGIPLSIGLIAW), 123 to 143 (YFVTLPFFQWSVFAIWVGIIL), 168 to 185 (SIAVTANCLVNFTVVYSY), 204 to 224 (GIAILAFALGKLAYAATLLMC), 343 to 363 (VLVNLTKFYLYLSLLVMIFGP), 391 to 411 (CVYIPFLSFNGIFEAFLASVA), 421 to 441 (YFMMMCSFAFLINSWIFIEYL), 448 to 468 (LIISNIINMSLRIIYSFSFIV), 489 to 509 (ATLGAAALVAILNWQMVGYVS), and 510 to 530 (SFNGFITSATLALILLSVILI).

This sequence belongs to the RFT1 family.

It localises to the endoplasmic reticulum membrane. Its pathway is protein modification; protein glycosylation. In terms of biological role, intramembrane glycolipid transporter that operates in the biosynthetic pathway of dolichol-linked oligosaccharides, the glycan precursors employed in protein asparagine (N)-glycosylation. The sequential addition of sugars to dolichol pyrophosphate produces dolichol-linked oligosaccharides containing fourteen sugars, including two GlcNAcs, nine mannoses and three glucoses. Once assembled, the oligosaccharide is transferred from the lipid to nascent proteins by oligosaccharyltransferases. The assembly of dolichol-linked oligosaccharides begins on the cytosolic side of the endoplasmic reticulum membrane and finishes in its lumen. RFT1 could mediate the translocation of the cytosolically oriented intermediate DolPP-GlcNAc2Man5, produced by ALG11, into the ER lumen where dolichol-linked oligosaccharides assembly continues. However, the intramembrane lipid transporter activity could not be confirmed in vitro. The protein is Man(5)GlcNAc(2)-PP-dolichol translocation protein RFT1 (RFT1) of Candida glabrata (strain ATCC 2001 / BCRC 20586 / JCM 3761 / NBRC 0622 / NRRL Y-65 / CBS 138) (Yeast).